A 448-amino-acid chain; its full sequence is 3-phosphoshikimate 1-carboxyvinyltransferase (448 aa).

3-phosphoshikimate contacts are provided by Lys-28, Ser-29, and Arg-33. Residue Lys-28 coordinates phosphoenolpyruvate. 2 residues coordinate phosphoenolpyruvate: Gly-100 and Arg-128. Positions 173, 175, 326, and 353 each coordinate 3-phosphoshikimate. Gln-175 contacts phosphoenolpyruvate. The Proton acceptor role is filled by Asp-326. 2 residues coordinate phosphoenolpyruvate: Arg-357 and Arg-405.

It belongs to the EPSP synthase family. As to quaternary structure, monomer.

It localises to the cytoplasm. The catalysed reaction is 3-phosphoshikimate + phosphoenolpyruvate = 5-O-(1-carboxyvinyl)-3-phosphoshikimate + phosphate. The protein operates within metabolic intermediate biosynthesis; chorismate biosynthesis; chorismate from D-erythrose 4-phosphate and phosphoenolpyruvate: step 6/7. In terms of biological role, catalyzes the transfer of the enolpyruvyl moiety of phosphoenolpyruvate (PEP) to the 5-hydroxyl of shikimate-3-phosphate (S3P) to produce enolpyruvyl shikimate-3-phosphate and inorganic phosphate. This Sinorhizobium fredii (strain NBRC 101917 / NGR234) protein is 3-phosphoshikimate 1-carboxyvinyltransferase.